A 164-amino-acid chain; its full sequence is Pleckstrin homology domain-containing family J member 1 (164 aa).

One can recognise a PH domain in the interval 15–108 (PAEMAAELGM…WMEALQRASY (94 aa)).

In Mus musculus (Mouse), this protein is Pleckstrin homology domain-containing family J member 1 (Plekhj1).